A 61-amino-acid polypeptide reads, in one-letter code: Large ribosomal subunit protein bL33 (61 aa).

Belongs to the bacterial ribosomal protein bL33 family.

The protein is Large ribosomal subunit protein bL33 of Amoebophilus asiaticus (strain 5a2).